The sequence spans 176 residues: MLITIPEVFTPEEAESIRQRLDATEWLDGKVTAGYQSAKAKNNLQLAENHPLAIELGDLIVSRLTQHPLFMSAALPRKVFPPLFNRYESGQSFGFHIDNAVRSLSGSRERVRTDLSSTLFFTPPEDYDGGELIRHASNQIARGTYGAVSRHQPAQGHAGDPGGTHLIFLLDPEPDP.

The region spanning 78 to 147 is the Fe2OG dioxygenase domain; the sequence is KVFPPLFNRY…NQIARGTYGA (70 aa).

Requires Fe(2+) as cofactor. It depends on L-ascorbate as a cofactor.

The chain is PKHD-type hydroxylase Mfla_0096 from Methylobacillus flagellatus (strain ATCC 51484 / DSM 6875 / VKM B-1610 / KT).